Reading from the N-terminus, the 126-residue chain is Fluoride-specific ion channel FluC (126 aa).

4 helical membrane passes run 3 to 23, 35 to 55, 68 to 88, and 103 to 123; these read LSIL…WFLG, LGTL…VAYF, FIIT…AEVV, and IAIH…TVAV. Na(+) contacts are provided by Gly-75 and Ser-78.

Belongs to the fluoride channel Fluc/FEX (TC 1.A.43) family.

The protein resides in the cell inner membrane. The catalysed reaction is fluoride(in) = fluoride(out). Na(+) is not transported, but it plays an essential structural role and its presence is essential for fluoride channel function. Fluoride-specific ion channel. Important for reducing fluoride concentration in the cell, thus reducing its toxicity. The sequence is that of Fluoride-specific ion channel FluC from Paraburkholderia phymatum (strain DSM 17167 / CIP 108236 / LMG 21445 / STM815) (Burkholderia phymatum).